Consider the following 159-residue polypeptide: Ribosome maturation factor RimP (159 aa).

The protein belongs to the RimP family.

The protein localises to the cytoplasm. In terms of biological role, required for maturation of 30S ribosomal subunits. In Bordetella avium (strain 197N), this protein is Ribosome maturation factor RimP.